The primary structure comprises 364 residues: Anthranilate phosphoribosyltransferase (364 aa).

Residues glycine 101, 104–105, threonine 109, 111–114, 129–137, and glycine 141 each bind 5-phospho-alpha-D-ribose 1-diphosphate; these read GD, NLST, and KHGNRAASS. Residue glycine 101 coordinates anthranilate. Serine 113 is a Mg(2+) binding site. Anthranilate is bound at residue asparagine 132. Anthranilate is bound at residue arginine 187. Positions 245 and 246 each coordinate Mg(2+).

Belongs to the anthranilate phosphoribosyltransferase family. As to quaternary structure, homodimer. It depends on Mg(2+) as a cofactor.

The enzyme catalyses N-(5-phospho-beta-D-ribosyl)anthranilate + diphosphate = 5-phospho-alpha-D-ribose 1-diphosphate + anthranilate. It functions in the pathway amino-acid biosynthesis; L-tryptophan biosynthesis; L-tryptophan from chorismate: step 2/5. Its function is as follows. Catalyzes the transfer of the phosphoribosyl group of 5-phosphorylribose-1-pyrophosphate (PRPP) to anthranilate to yield N-(5'-phosphoribosyl)-anthranilate (PRA). In Mycolicibacterium vanbaalenii (strain DSM 7251 / JCM 13017 / BCRC 16820 / KCTC 9966 / NRRL B-24157 / PYR-1) (Mycobacterium vanbaalenii), this protein is Anthranilate phosphoribosyltransferase.